Consider the following 539-residue polypeptide: Chaperonin GroEL (539 aa).

Residues 29 to 32 (TLGP), 86 to 90 (DGTTT), Gly-413, and Asp-494 each bind ATP.

The protein belongs to the chaperonin (HSP60) family. As to quaternary structure, forms a cylinder of 14 subunits composed of two heptameric rings stacked back-to-back. Interacts with the co-chaperonin GroES.

It localises to the cytoplasm. It catalyses the reaction ATP + H2O + a folded polypeptide = ADP + phosphate + an unfolded polypeptide.. Its function is as follows. Together with its co-chaperonin GroES, plays an essential role in assisting protein folding. The GroEL-GroES system forms a nano-cage that allows encapsulation of the non-native substrate proteins and provides a physical environment optimized to promote and accelerate protein folding. The sequence is that of Chaperonin GroEL from Finegoldia magna (strain ATCC 29328 / DSM 20472 / WAL 2508) (Peptostreptococcus magnus).